The primary structure comprises 376 residues: Polygalacturonase (376 aa).

Residues 1–20 form the signal peptide; sequence MASSLKLGLIALLGATAVNA. Cys39 and Cys57 are oxidised to a cystine. The PbH1 1 repeat unit spans residues 170 to 208; the sequence is AKELTLSGITVDTADGDSNGGHNTDAFDVGSSNGVYITS. Asp215 acts as the Proton donor in catalysis. Cys217 and Cys233 are oxidised to a cystine. PbH1 repeat units lie at residues 223–243, 252–273, 281–303, and 315–360; these read GTNV…SIGS, VDGV…RIKT, VQGV…VIEQ, and TSGV…SITG. His237 is an active-site residue. 2 cysteine pairs are disulfide-bonded: Cys343–Cys348 and Cys367–Cys376.

This sequence belongs to the glycosyl hydrolase 28 family.

It is found in the secreted. The catalysed reaction is (1,4-alpha-D-galacturonosyl)n+m + H2O = (1,4-alpha-D-galacturonosyl)n + (1,4-alpha-D-galacturonosyl)m.. This chain is Polygalacturonase (PGG1), found in Penicillium griseoroseum.